We begin with the raw amino-acid sequence, 487 residues long: Glutamyl-tRNA(Gln) amidotransferase subunit A (487 aa).

Residues Lys-80 and Ser-155 each act as charge relay system in the active site. The active-site Acyl-ester intermediate is the Ser-179.

This sequence belongs to the amidase family. GatA subfamily. As to quaternary structure, heterotrimer of A, B and C subunits.

The catalysed reaction is L-glutamyl-tRNA(Gln) + L-glutamine + ATP + H2O = L-glutaminyl-tRNA(Gln) + L-glutamate + ADP + phosphate + H(+). In terms of biological role, allows the formation of correctly charged Gln-tRNA(Gln) through the transamidation of misacylated Glu-tRNA(Gln) in organisms which lack glutaminyl-tRNA synthetase. The reaction takes place in the presence of glutamine and ATP through an activated gamma-phospho-Glu-tRNA(Gln). The chain is Glutamyl-tRNA(Gln) amidotransferase subunit A from Leptospira interrogans serogroup Icterohaemorrhagiae serovar Lai (strain 56601).